A 926-amino-acid polypeptide reads, in one-letter code: Serine/threonine-protein kinase pakE (926 aa).

Positions 36–55 are enriched in polar residues; sequence SSRELPTQDSSTKTSNITTP. 2 disordered regions span residues 36 to 257 and 546 to 576; these read SSRE…RPKL and QLNNNNNNNNNNNNNNNNNNNNNNNNITTTT. Residues 56-107 show a composition bias toward low complexity; the sequence is NNNNNNNNNNNNNNNNNNNNNNNNNNNNNNNNNNNNNNNNNNNNNNNNNNNN. Polar residues predominate over residues 108–117; the sequence is TPTSLNSSWK. Residues 134-173 are compositionally biased toward low complexity; that stretch reads NNNNNVGSPNNQSTSQTNHQQPPPQQLQQQQSLSSTSTPS. Residues 183-204 show a composition bias toward polar residues; that stretch reads RRNVTSPNLTRSDPTVPITNSR. A compositionally biased stretch (low complexity) spans 215–253; it reads PQFQLNNLNFDDNNDHSTTTTNNNNNNNNNNSNNNNNNN. The stretch at 534-567 forms a coiled coil; sequence LDFEKELKENQQQLNNNNNNNNNNNNNNNNNNNN. Positions 650 to 903 constitute a Protein kinase domain; the sequence is FEFKEKLGQG…VIDLLSHDFI (254 aa). ATP contacts are provided by residues 656–664 and Lys-679; that span reads LGQGGYGAV. Asp-771 (proton acceptor) is an active-site residue.

Belongs to the protein kinase superfamily. STE Ser/Thr protein kinase family. STE20 subfamily. It depends on Mg(2+) as a cofactor.

It carries out the reaction L-seryl-[protein] + ATP = O-phospho-L-seryl-[protein] + ADP + H(+). The enzyme catalyses L-threonyl-[protein] + ATP = O-phospho-L-threonyl-[protein] + ADP + H(+). Functionally, may play a role in responding to changes in chemoattractant levels. The chain is Serine/threonine-protein kinase pakE from Dictyostelium discoideum (Social amoeba).